The primary structure comprises 103 residues: Histone H4.1 (103 aa).

Residues 1 to 14 (MSGRGKGGKGLGKG) are compositionally biased toward gly residues. The tract at residues 1 to 20 (MSGRGKGGKGLGKGGAKRHR) is disordered. Residue Lys6 is modified to N6-acetyl-N6-methyllysine; alternate. N6-methyllysine; alternate occurs at positions 6, 9, and 13. An N6-acetyl-N6-methyllysine; alternate modification is found at Lys13. Residues 17–21 (KRHRK) mediate DNA binding. An N6-glutaryllysine modification is found at Lys92.

The protein belongs to the histone H4 family. As to quaternary structure, the nucleosome is a histone octamer containing two molecules each of H2A, H2B, H3 and H4 assembled in one H3-H4 heterotetramer and two H2A-H2B heterodimers. The octamer wraps approximately 147 bp of DNA. Post-translationally, glutarylation at Lys-92 (H4K91glu) destabilizes nucleosomes by promoting dissociation of the H2A-H2B dimers from nucleosomes.

It localises to the nucleus. The protein localises to the chromosome. In terms of biological role, core component of nucleosome. Nucleosomes wrap and compact DNA into chromatin, limiting DNA accessibility to the cellular machineries which require DNA as a template. Histones thereby play a central role in transcription regulation, DNA repair, DNA replication and chromosomal stability. DNA accessibility is regulated via a complex set of post-translational modifications of histones, also called histone code, and nucleosome remodeling. This Eremothecium gossypii (strain ATCC 10895 / CBS 109.51 / FGSC 9923 / NRRL Y-1056) (Yeast) protein is Histone H4.1 (HHF1).